The following is a 143-amino-acid chain: Glutamyl-tRNA(Gln) amidotransferase subunit C, chloroplastic/mitochondrial (143 aa).

The protein belongs to the GatC family. Subunit of the heterotrimeric GatCAB amidotransferase (AdT) complex, composed of A, B and C subunits.

The protein resides in the mitochondrion. The protein localises to the plastid. It localises to the chloroplast. The catalysed reaction is L-glutamyl-tRNA(Gln) + L-glutamine + ATP + H2O = L-glutaminyl-tRNA(Gln) + L-glutamate + ADP + phosphate + H(+). In terms of biological role, allows the formation of correctly charged Gln-tRNA(Gln) through the transamidation of misacylated Glu-tRNA(Gln) in chloroplasts and mitochondria. The reaction takes place in the presence of glutamine and ATP through an activated gamma-phospho-Glu-tRNA(Gln). This chain is Glutamyl-tRNA(Gln) amidotransferase subunit C, chloroplastic/mitochondrial, found in Ricinus communis (Castor bean).